The following is an 889-amino-acid chain: Oxysterol-binding protein-related protein 8 (889 aa).

An N-acetylmethionine modification is found at Met1. The segment at 1 to 129 (MEAALADGEP…SLKVQKKNYR (129 aa)) is disordered. Residues Ser14, Ser65, and Ser68 each carry the phosphoserine modification. Over residues 62–71 (PSLSPASLHS) the composition is skewed to polar residues. Basic and acidic residues-rich tracts occupy residues 73–88 (GFER…KDDS), 95–109 (SKSE…EKDS), and 116–129 (TKKE…KNYR). One can recognise a PH domain in the interval 148 to 265 (VIVMADWLKI…WMDALELALK (118 aa)). Phosphoserine is present on residues Ser314, Ser328, and Ser342. Residues 321-336 (FKDQDLYSDKSDKEND) are compositionally biased toward basic and acidic residues. A disordered region spans residues 321-374 (FKDQDLYSDKSDKENDPEHDESDNEVLGKSEESDTDTSERQDDSYIDPEPVEPL). The span at 346–363 (VLGKSEESDTDTSERQDD) shows a compositional bias: basic and acidic residues. Residues 420–425 (LSRVVL), 482–485 (KPYN), and 514–515 (HH) each bind a 1,2-diacyl-sn-glycero-3-phospho-(1D-myo-inositol 4-phosphate). A 1,2-diacyl-sn-glycero-3-phospho-L-serine is bound by residues 420-425 (LSRVVL) and Asn485. Ser540 provides a ligand contact to a 1,2-diacyl-sn-glycero-3-phospho-L-serine. A 1,2-diacyl-sn-glycero-3-phospho-(1D-myo-inositol 4-phosphate) is bound by residues Lys706, Glu710, and Arg714. The disordered stretch occupies residues 772–823 (HRTPMVSVPKMKHKPTRQQKKVVKGYSSPEPDIQDSSGSEAQSVKPSTRRKK). Residues 781–794 (KMKHKPTRQQKKVV) are compositionally biased toward basic residues. The segment covering 805–817 (QDSSGSEAQSVKP) has biased composition (polar residues). A phosphoserine mark is found at Ser807, Ser808, Ser810, and Ser814. A helical membrane pass occupies residues 871–888 (YFVIFLLILLQVIINFIF).

The protein belongs to the OSBP family. Interacts with SPAG5. Interacts with NUP62. In terms of tissue distribution, widely expressed. Most abundant in liver, spleen, kidney, brain and adipose tissue.

It localises to the endoplasmic reticulum membrane. The protein resides in the nucleus membrane. Lipid transporter involved in lipid countertransport between the endoplasmic reticulum and the plasma membrane: specifically exchanges phosphatidylserine with phosphatidylinositol 4-phosphate (PI4P), delivering phosphatidylserine to the plasma membrane in exchange for PI4P, which is degraded by the SAC1/SACM1L phosphatase in the endoplasmic reticulum. Binds phosphatidylserine and PI4P in a mutually exclusive manner. Binds oxysterol, 25-hydroxycholesterol and cholesterol. This chain is Oxysterol-binding protein-related protein 8, found in Mus musculus (Mouse).